A 541-amino-acid polypeptide reads, in one-letter code: MHPEFAPVAFLSAASLALPLPWHWRAGNVATLSIIAWLFIMNMIYGINAVIWAGSARITAVVYCDITTKLTIGGNFALPAACLCLCIHLERVASVRAAQTTAADKRRRTIFELAMCWLLPIIFMALHYVVQGHRFDIVEDFGCRPATYYSIPAIFIVWVPPLTMAAASLVYASLAIRHFMHRRLSFAMHLQARSSALTTSRYLRLILMAIVQLVWLVVTTAYTLWFSSMTLNLRPWTTWADVHSNFGRIQTWPAIITPAVILRGACTLWWMVPASTWIFVAFFAFGNDAVEEYKRVLNVVLSGARRALPEGFLSEKKRDLKGFSLPSFVKGSVPLGDSSSSTRKDSLPDKAVLPVNRSVTMTTTTSTVVSSMPPPYSLPPPPPPQKYTSPLDSLDYSADADRISISSSVDTSGYTIEILPETPSTSSSTPPSPSSPQYPRSPSSQGSHVVDDYYYTSSPQDSLPHDIPAPPSLPPPTHMPDEAHISPSHAVPSRPPAFPPYPFARDMRPAASEPMSPRPITYPSMSPTHRDIASVFPGGRR.

The Extracellular segment spans residues 1–3 (MHP). A helical membrane pass occupies residues 4–24 (EFAPVAFLSAASLALPLPWHW). The Cytoplasmic portion of the chain corresponds to 25 to 33 (RAGNVATLS). Residues 34 to 54 (IIAWLFIMNMIYGINAVIWAG) traverse the membrane as a helical segment. Residues 55 to 69 (SARITAVVYCDITTK) are Extracellular-facing. The chain crosses the membrane as a helical span at residues 70 to 90 (LTIGGNFALPAACLCLCIHLE). Residues 91-109 (RVASVRAAQTTAADKRRRT) lie on the Cytoplasmic side of the membrane. The helical transmembrane segment at 110 to 130 (IFELAMCWLLPIIFMALHYVV) threads the bilayer. Residues 131-150 (QGHRFDIVEDFGCRPATYYS) are Extracellular-facing. The helical transmembrane segment at 151–171 (IPAIFIVWVPPLTMAAASLVY) threads the bilayer. Over 172–205 (ASLAIRHFMHRRLSFAMHLQARSSALTTSRYLRL) the chain is Cytoplasmic. The chain crosses the membrane as a helical span at residues 206–226 (ILMAIVQLVWLVVTTAYTLWF). Residues 227–264 (SSMTLNLRPWTTWADVHSNFGRIQTWPAIITPAVILRG) lie on the Extracellular side of the membrane. The helical transmembrane segment at 265–285 (ACTLWWMVPASTWIFVAFFAF) threads the bilayer. The Cytoplasmic segment spans residues 286 to 541 (GNDAVEEYKR…IASVFPGGRR (256 aa)). Disordered regions lie at residues 364 to 393 (TTSTVVSSMPPPYSLPPPPPPQKYTSPLDS) and 414 to 541 (YTIE…GGRR). Over residues 372–385 (MPPPYSLPPPPPPQ) the composition is skewed to pro residues. Residues 420-429 (PETPSTSSST) are compositionally biased toward low complexity. Pro residues-rich tracts occupy residues 467–478 (IPAPPSLPPPTH) and 493–502 (SRPPAFPPYP).

Belongs to the G-protein coupled receptor 4 family.

The protein resides in the membrane. Functionally, receptor for the BBP1 pheromone, a prenylated mating factor. This Schizophyllum commune (Split gill fungus) protein is Pheromone B beta 1 receptor (BBR1).